Consider the following 243-residue polypeptide: Pyridoxine 5'-phosphate synthase (243 aa).

Asn-7 contacts 3-amino-2-oxopropyl phosphate. 9 to 10 (DH) is a binding site for 1-deoxy-D-xylulose 5-phosphate. A 3-amino-2-oxopropyl phosphate-binding site is contributed by Arg-18. The active-site Proton acceptor is His-43. Residues Arg-45 and His-50 each coordinate 1-deoxy-D-xylulose 5-phosphate. Glu-70 functions as the Proton acceptor in the catalytic mechanism. 1-deoxy-D-xylulose 5-phosphate is bound at residue Thr-100. The active-site Proton donor is the His-191. 3-amino-2-oxopropyl phosphate is bound by residues Gly-192 and 213–214 (GH).

It belongs to the PNP synthase family. As to quaternary structure, homooctamer; tetramer of dimers.

It localises to the cytoplasm. It catalyses the reaction 3-amino-2-oxopropyl phosphate + 1-deoxy-D-xylulose 5-phosphate = pyridoxine 5'-phosphate + phosphate + 2 H2O + H(+). Its pathway is cofactor biosynthesis; pyridoxine 5'-phosphate biosynthesis; pyridoxine 5'-phosphate from D-erythrose 4-phosphate: step 5/5. Functionally, catalyzes the complicated ring closure reaction between the two acyclic compounds 1-deoxy-D-xylulose-5-phosphate (DXP) and 3-amino-2-oxopropyl phosphate (1-amino-acetone-3-phosphate or AAP) to form pyridoxine 5'-phosphate (PNP) and inorganic phosphate. In Magnetococcus marinus (strain ATCC BAA-1437 / JCM 17883 / MC-1), this protein is Pyridoxine 5'-phosphate synthase.